Here is a 433-residue protein sequence, read N- to C-terminus: PHO85 cyclin-10 (433 aa).

Basic and acidic residues predominate over residues 1 to 10; sequence MDMTKNHTTD. Disordered stretches follow at residues 1–20 and 51–81; these read MDMTKNHTTDTEEFDDGDIR and LTSEWDQSRSNTPGLAEGKTEKAQPCGTTDS. Positions 51 to 63 are enriched in polar residues; it reads LTSEWDQSRSNTP.

This sequence belongs to the cyclin family. PHO80 subfamily. As to quaternary structure, forms a cyclin-CDK complex with PHO85. Interacts with GSY2, independent of the presence of PHO85.

It localises to the cytoplasm. In terms of biological role, cyclin partner of the cyclin-dependent kinase (CDK) PHO85. Together with cyclin PCL8, negatively controls glycogen accumulation under favorable growth conditions. The PCL10-PHO85 cyclin-CDK holoenzyme has glycogen synthase kinase activity and phosphorylates and negatively regulates glycogen synthase GSY2. Also has minor GLC8 kinase activity. The sequence is that of PHO85 cyclin-10 (PCL10) from Saccharomyces cerevisiae (strain ATCC 204508 / S288c) (Baker's yeast).